A 266-amino-acid chain; its full sequence is Gasdermin bGSDM (266 aa).

A lipid anchor (S-palmitoyl cysteine) is attached at C6. 4 beta stranded membrane-spanning segments follow: residues 70-86, 99-117, 163-180, and 189-205; these read ISHS…AGNF, APKL…FSFS, AIDM…DVQA, and LGGK…TISF. A C-terminal region region spans residues 245–266; the sequence is GAAEPYLLRRGQVLIVEDMQAT.

The protein belongs to the bacterial gasdermin family. In terms of assembly, monomer. As to quaternary structure, forms large, homooligomeric ring-shaped pores when inserted in membranes. Post-translationally, cleavage by the adjacently encoded protease (probably ISF6_0256) predicted to occur between Glu-244 and Gly-245 relieves autoinhibition, releasing the N-terminus which initiates loss of cell integrity. Palmitoylation helps stabilize the inactive state; may self palmitoylate. Palmitoylation plays a significant role in pore formation.

It is found in the cytoplasm. The protein resides in the cell inner membrane. With respect to regulation, the full-length protein before cleavage is inactive: intramolecular interactions between the N-terminal domain and the C-terminal region as well as the lipid modification, mediate autoinhibition. The pyroptosis-like-inducing activity is carried by the released N-terminal domain (Gasdermin bGSDM, N-terminus). Functionally, precursor of a pore-forming protein involved in defense against bacteriophages. Cleavage of this precursor by its dedicated, neighboring protease (probably ISF6_0256) releases the active moiety (gasdermin bGSDM, N-terminus) which inserts into membranes, forming pores and triggering cell death. Its function is as follows. Pore-forming protein that causes membrane permeabilization via a pyroptosis-like activity. Makes ring-like pores with an interior pore diameter of 300-400 Angstroms, when integrated in liposomes. This is Gasdermin bGSDM from Piscinibacter sakaiensis (Ideonella sakaiensis).